A 472-amino-acid chain; its full sequence is FAD-dependent monooxygenase dpmaE (472 aa).

The signal sequence occupies residues 1 to 24 (MSQRQFKVIIIGGSVTGLTLAHSL). Positions 35, 49, and 108 each coordinate FAD. N-linked (GlcNAc...) asparagine glycosylation is found at Asn-128 and Asn-179. Positions 305 and 318 each coordinate FAD. An N-linked (GlcNAc...) asparagine glycan is attached at Asn-369. The chain crosses the membrane as a helical span at residues 440–460 (LLPLMFTLPLLYFGLSWIVGI).

Belongs to the paxM FAD-dependent monooxygenase family. The cofactor is FAD.

Its subcellular location is the membrane. It participates in secondary metabolite biosynthesis; terpenoid biosynthesis. FAD-dependent monooxygenase; part of the gene cluster that mediates the biosynthesis of the diterpenoid pyrones subglutinols A and B. The first step of the pathway is the synthesis of the alpha-pyrone moiety by the polyketide synthase dpmaA via condensation of one acetyl-CoA starter unit with 3 malonyl-CoA units and 2 methylations. The alpha-pyrone is then combined with geranylgeranyl pyrophosphate (GGPP) formed by the GGPP synthase dpmaD through the action of the prenyltransferase dpmaC to yield a linear alpha-pyrone diterpenoid. Subsequent steps in the diterpenoid pyrone biosynthetic pathway involve the decalin core formation, which is initiated by the epoxidation of the C10-C11 olefin by the FAD-dependent oxidoreductase dpmaE, and is followed by a cyclization cascade catalyzed by the terpene cyclase dpmaB. The dehydrogenase dpmaF is then involved in tetrahydrofuran (THF) ring formation at the C5 unit to complete the formation of subglutinols A and B. The sequence is that of FAD-dependent monooxygenase dpmaE from Metarhizium anisopliae (Entomophthora anisopliae).